Here is a 95-residue protein sequence, read N- to C-terminus: MGSMSVWHWVIVAVVVMLLFGRGKVSELMGDVAKGIKAFKKGMADDETQPNTATSVPPVGPNDPVRTLPHQGAPGTAPQPPHVQPHVSAGDHKAV.

A helical transmembrane segment spans residues M1–G21. The disordered stretch occupies residues G42–V95.

The protein belongs to the TatA/E family. As to quaternary structure, the Tat system comprises two distinct complexes: a TatABC complex, containing multiple copies of TatA, TatB and TatC subunits, and a separate TatA complex, containing only TatA subunits. Substrates initially bind to the TatABC complex, which probably triggers association of the separate TatA complex to form the active translocon.

Its subcellular location is the cell inner membrane. Functionally, part of the twin-arginine translocation (Tat) system that transports large folded proteins containing a characteristic twin-arginine motif in their signal peptide across membranes. TatA could form the protein-conducting channel of the Tat system. The sequence is that of Sec-independent protein translocase protein TatA from Methylorubrum extorquens (strain CM4 / NCIMB 13688) (Methylobacterium extorquens).